The primary structure comprises 549 residues: Efflux pump patC (549 aa).

The span at 1-12 (MAESTAHTSPSL) shows a compositional bias: polar residues. The interval 1–40 (MAESTAHTSPSLNDKEREVDQGILSDESGPAEEVKETPDQ) is disordered. The next 14 membrane-spanning stretches (helical) occupy residues 50–70 (LLIC…NTIV), 85–105 (AQLG…ILPL), 116–136 (WLFI…GGAP), 146–166 (VWAG…ITIL), 178–198 (LVGL…GAFA), 206–226 (WGFY…VFLL), 252–272 (VLSA…GVMW), 282–302 (LYVV…FCVL), 321–341 (IALY…VYYI), 360–380 (LLPF…LMPK), 385–405 (VLWY…MYTV), 419–439 (ILLG…PSLV), 460–482 (LLGL…NALL), and 526–546 (VYVM…FLPW).

The protein belongs to the major facilitator superfamily. TCR/Tet family.

It localises to the vacuole membrane. The protein localises to the cell membrane. Efflux pump; part of the gene cluster that mediates the biosynthesis of patulin, an acetate-derived tetraketide mycotoxin produced by several fungal species that shows antimicrobial properties against several bacteria. May be involved in the secretion of E-ascladiol to be converted to patulin by the secreted patulin synthase patE. The polypeptide is Efflux pump patC (Aspergillus clavatus (strain ATCC 1007 / CBS 513.65 / DSM 816 / NCTC 3887 / NRRL 1 / QM 1276 / 107)).